The primary structure comprises 394 residues: Acid ceramidase (394 aa).

The signal sequence occupies residues 1–20 (MLGRSLLTWVLAAAVTCAQA). Cys-30 and Cys-339 are disulfide-bonded. Cys-142 (nucleophile) is an active-site residue. N-linked (GlcNAc...) asparagine glycans are attached at residues Asn-194, Asn-258, Asn-285, and Asn-341. A disulfide bond links Cys-387 and Cys-391.

Belongs to the acid ceramidase family. Heterodimer; disulfide-linked. The heterodimer is composed of the disulfide-linked alpha and beta chains produced by autocatalytic cleavage of the precursor. Post-translationally, N-glycosylated. In terms of processing, proteolytically cleaved into two chains alpha and beta that remain associated via a disulfide bond. Cleavage gives rise to a conformation change that activates the enzyme. The same catalytic Cys residue mediates the autoproteolytic cleavage and subsequent hydrolysis of lipid substrates. The beta chain may undergo an additional C-terminal processing.

It localises to the lysosome. Its subcellular location is the secreted. It carries out the reaction an N-acylsphing-4-enine + H2O = sphing-4-enine + a fatty acid. The catalysed reaction is N-dodecanoylsphing-4-enine + H2O = dodecanoate + sphing-4-enine. It catalyses the reaction N-tetradecanoylsphing-4-enine + H2O = tetradecanoate + sphing-4-enine. The enzyme catalyses N-hexadecanoylsphing-4-enine + H2O = sphing-4-enine + hexadecanoate. It carries out the reaction N-octadecanoylsphing-4-enine + H2O = sphing-4-enine + octadecanoate. The catalysed reaction is N-dodecanoyl-(4R)-hydroxysphinganine + H2O = (4R)-hydroxysphinganine + dodecanoate. It catalyses the reaction N-(dodecanoyl)-sphinganine + H2O = dodecanoate + sphinganine. The enzyme catalyses N-(acetyl)-sphing-4-enine + H2O = sphing-4-enine + acetate. It carries out the reaction N-(hexanoyl)sphing-4-enine + H2O = hexanoate + sphing-4-enine. The catalysed reaction is N-octanoylsphing-4-enine + H2O = octanoate + sphing-4-enine. It catalyses the reaction N-(9Z-octadecenoyl)-sphing-4-enine + H2O = sphing-4-enine + (9Z)-octadecenoate. The enzyme catalyses N-dodecanoylethanolamine + H2O = dodecanoate + ethanolamine. It participates in lipid metabolism; sphingolipid metabolism. Lysosomal ceramidase that hydrolyzes sphingolipid ceramides into sphingosine and free fatty acids at acidic pH. Ceramides, sphingosine, and its phosphorylated form sphingosine-1-phosphate are bioactive lipids that mediate cellular signaling pathways regulating several biological processes including cell proliferation, apoptosis and differentiation. Has a higher catalytic efficiency towards C12-ceramides versus other ceramides. Also catalyzes the reverse reaction allowing the synthesis of ceramides from fatty acids and sphingosine. For the reverse synthetic reaction, the natural sphingosine D-erythro isomer is more efficiently utilized as a substrate compared to D-erythro-dihydrosphingosine and D-erythro-phytosphingosine, while the fatty acids with chain lengths of 12 or 14 carbons are the most efficiently used. Also has an N-acylethanolamine hydrolase activity. By regulating the levels of ceramides, sphingosine and sphingosine-1-phosphate in the epidermis, mediates the calcium-induced differentiation of epidermal keratinocytes. Also indirectly regulates tumor necrosis factor/TNF-induced apoptosis. By regulating the intracellular balance between ceramides and sphingosine, in adrenocortical cells, probably also acts as a regulator of steroidogenesis. This chain is Acid ceramidase, found in Rattus norvegicus (Rat).